A 175-amino-acid chain; its full sequence is MALETCLRGWALYAPQAGIRERLSSGSYAPSRPRTAAPAVVSPSPYKSALVAARRPSRFVCKCKNVVDEVIVADEKNWDNMVIACESPVLVEFWAPWCGPCRMIAPVIDELAKDYVGKIKCCKVNTDDCPNIASTYGIRSIPTVLMFKDGEKKESVIGAVPKTTLCTIIDKYIGS.

The transit peptide at 1-62 (MALETCLRGW…ARRPSRFVCK (62 aa)) directs the protein to the chloroplast. The Thioredoxin domain occupies 63–174 (CKNVVDEVIV…LCTIIDKYIG (112 aa)). A disulfide bond links C98 and C101.

This sequence belongs to the thioredoxin family. Plant M-type subfamily. As to quaternary structure, forms a complex with heterodimeric ferredoxin-thioredoxin reductase (FTR) and ferredoxin.

It is found in the plastid. Its subcellular location is the chloroplast. Participates in various redox reactions through the reversible oxidation of the active center dithiol to a disulfide. The M form is known to activate NADP-malate dehydrogenase. The chain is Thioredoxin M-type, chloroplastic from Triticum aestivum (Wheat).